The primary structure comprises 123 residues: ATP synthase epsilon chain (123 aa).

It belongs to the ATPase epsilon chain family. F-type ATPases have 2 components, CF(1) - the catalytic core - and CF(0) - the membrane proton channel. CF(1) has five subunits: alpha(3), beta(3), gamma(1), delta(1), epsilon(1). CF(0) has three main subunits: a, b and c.

The protein localises to the cell inner membrane. Produces ATP from ADP in the presence of a proton gradient across the membrane. The protein is ATP synthase epsilon chain of Helicobacter acinonychis (strain Sheeba).